The primary structure comprises 248 residues: Probable transcriptional regulatory protein R02753 (248 aa).

Belongs to the TACO1 family.

The protein localises to the cytoplasm. This Rhizobium meliloti (strain 1021) (Ensifer meliloti) protein is Probable transcriptional regulatory protein R02753.